We begin with the raw amino-acid sequence, 283 residues long: ATP phosphoribosyltransferase (283 aa).

The protein belongs to the ATP phosphoribosyltransferase family. Long subfamily. The cofactor is Mg(2+).

The protein resides in the cytoplasm. The enzyme catalyses 1-(5-phospho-beta-D-ribosyl)-ATP + diphosphate = 5-phospho-alpha-D-ribose 1-diphosphate + ATP. The protein operates within amino-acid biosynthesis; L-histidine biosynthesis; L-histidine from 5-phospho-alpha-D-ribose 1-diphosphate: step 1/9. Feedback inhibited by histidine. Its function is as follows. Catalyzes the condensation of ATP and 5-phosphoribose 1-diphosphate to form N'-(5'-phosphoribosyl)-ATP (PR-ATP). Has a crucial role in the pathway because the rate of histidine biosynthesis seems to be controlled primarily by regulation of HisG enzymatic activity. This is ATP phosphoribosyltransferase from Parabacteroides distasonis (strain ATCC 8503 / DSM 20701 / CIP 104284 / JCM 5825 / NCTC 11152).